Consider the following 513-residue polypeptide: MAKFEGYLEKQKSRQQYFVYPLLFQEYIYAFAHDYVLNGSEPVEIIGCNNKKFSSLLVKRLIIRMYQQNFWINSVNHSNQDRLLDHSNHFFSEFYSQILSEGFAIVVEIPFSLGQLSCPEEKEIPKFQNLRSIHSIFPFLEDKFLHLHYLSHIEIPYPIHFEILVRLLEXRIQDVPSLHLLRFFLNYYSIWNSLITSMKSVFLLKKENKRLFRFLYNSYVSEYEFFLLFLPKQSSCLRLTSSGTFLQRIHFSVKMEHFGVMYPGFSRKTIWFFMDPLMHYVRYQGKAIFASKGTFFLKKKWKSYLVNFPQYPSSSWTQPQRIRLNQLTRSCFDFLGYFSSVPINTFLVRNQMLENFFLIDTRMRKFDTTAPATPLIGSLSKAQFCTGLGHPISKPIWTDLSDWDILDRFGRICRNLFHYHSGSSKKRTLYRLKYILRLSCARTLARKHKSTVRTFMQRLGSVFLEEFFTEEEQVFSLMFAKTTHFSFHGSHSERIWYLDIIRIDDLVNPLTLN.

The protein belongs to the intron maturase 2 family. MatK subfamily.

It localises to the plastid. The protein localises to the chloroplast. In terms of biological role, usually encoded in the trnK tRNA gene intron. Probably assists in splicing its own and other chloroplast group II introns. In Eleusine indica (Goosegrass), this protein is Maturase K.